Reading from the N-terminus, the 246-residue chain is UDP-N-acetyl-D-mannosaminuronic acid transferase (246 aa).

Belongs to the glycosyltransferase 26 family.

It catalyses the reaction UDP-N-acetyl-alpha-D-mannosaminouronate + N-acetyl-alpha-D-glucosaminyl-di-trans,octa-cis-undecaprenyl diphosphate = beta-D-ManNAcA-(1-&gt;4)-alpha-D-GlcNAc-di-trans,octa-cis-undecaprenyl diphosphate + UDP + H(+). It functions in the pathway bacterial outer membrane biogenesis; enterobacterial common antigen biosynthesis. Functionally, catalyzes the synthesis of Und-PP-GlcNAc-ManNAcA (Lipid II), the second lipid-linked intermediate involved in enterobacterial common antigen (ECA) synthesis. The protein is UDP-N-acetyl-D-mannosaminuronic acid transferase of Salmonella agona (strain SL483).